The sequence spans 666 residues: Long chain acyl-CoA synthetase 4 (666 aa).

228-239 contributes to the ATP binding site; sequence IMYTSGTTGDPK. Residues 495–519 form a fatty acid-binding region; that stretch reads DGWLHTGDVGEWQPDGSMKIIDRKK.

This sequence belongs to the ATP-dependent AMP-binding enzyme family. It depends on Mg(2+) as a cofactor.

The catalysed reaction is a long-chain fatty acid + ATP + CoA = a long-chain fatty acyl-CoA + AMP + diphosphate. It participates in lipid metabolism; fatty acid metabolism. Activation of long-chain fatty acids for both synthesis of cellular lipids, and degradation via beta-oxidation. Preferentially uses palmitate, palmitoleate, oleate and linoleate. In Arabidopsis thaliana (Mouse-ear cress), this protein is Long chain acyl-CoA synthetase 4 (LACS4).